A 506-amino-acid chain; its full sequence is MNTMTLTPGQLSLSQLYDVWRHPVQLRLDASAIDGINASVACVNDIVAEGRTAYGINTGFGLLAQTRIADEDLQNLQRSLVLSHAAGVGDPLDDAMVRLIMVLKINSLARGFSGIRLSVIEALIALVNAGVYPLIPAKGSVGASGDLAPLAHLSLTLLGEGKARWQGEWLPAQTALKKAGLEPVALAAKEGLALLNGTQASTAFALRGLFEAQELFASAVVCGALTTEAVLGSRRPFDARIHAARGQQGQIDVARLFRHLLTDTSAIAESHHHCHKVQDPYSLRCQPQVMGACLTQLRQTKEVLLAEANAVSDNPLVFADAGEVISGGNFHAEPVAMAADNLALAIAEIGALSERRIALMMDKHMSQLPPFLVKNGGVNSGFMIAQVTAAALASENKALAHPHSVDSLPTSANQEDHVSMAPAAGRRLWEMAANTRGIIAVEWLAACQGIDLREGLTSSPLLEQARQTLRERVAHYTQDRFFAPDIECATALLAQGALQRLVPDFM.

Positions 143–145 form a cross-link, 5-imidazolinone (Ala-Gly); it reads ASG. Ser-144 is modified (2,3-didehydroalanine (Ser)).

The protein belongs to the PAL/histidase family. Contains an active site 4-methylidene-imidazol-5-one (MIO), which is formed autocatalytically by cyclization and dehydration of residues Ala-Ser-Gly.

It is found in the cytoplasm. The catalysed reaction is L-histidine = trans-urocanate + NH4(+). It participates in amino-acid degradation; L-histidine degradation into L-glutamate; N-formimidoyl-L-glutamate from L-histidine: step 1/3. This Salmonella paratyphi C (strain RKS4594) protein is Histidine ammonia-lyase.